The chain runs to 108 residues: Tetrahydromethanopterin S-methyltransferase subunit B (108 aa).

Residues 81-101 form a helical membrane-spanning segment; that stretch reads FFGFWISLSILTLGLILVIGL.

The protein belongs to the MtrB family. In terms of assembly, the complex is composed of 8 subunits; MtrA, MtrB, MtrC, MtrD, MtrE, MtrF, MtrG and MtrH.

Its subcellular location is the cell membrane. The enzyme catalyses 5-methyl-5,6,7,8-tetrahydromethanopterin + coenzyme M + 2 Na(+)(in) = 5,6,7,8-tetrahydromethanopterin + methyl-coenzyme M + 2 Na(+)(out). Its pathway is one-carbon metabolism; methanogenesis from CO(2); methyl-coenzyme M from 5,10-methylene-5,6,7,8-tetrahydromethanopterin: step 2/2. Part of a complex that catalyzes the formation of methyl-coenzyme M and tetrahydromethanopterin from coenzyme M and methyl-tetrahydromethanopterin. This is an energy-conserving, sodium-ion translocating step. This Methanococcus aeolicus (strain ATCC BAA-1280 / DSM 17508 / OCM 812 / Nankai-3) protein is Tetrahydromethanopterin S-methyltransferase subunit B.